The chain runs to 213 residues: Ras-related protein Rab-2 (213 aa).

Residues threonine 15, glycine 16, glycine 18, lysine 19, serine 20, cysteine 21, glutamine 32, proline 33, histidine 35, threonine 38, glycine 64, asparagine 119, aspartate 122, and alanine 150 each contribute to the GTP site. A Mg(2+)-binding site is contributed by serine 20. Mg(2+) is bound at residue threonine 38. The tract at residues 190 to 213 (QHSPTNPSLPGAGGAAGAANSGCC) is disordered. Residues cysteine 212 and cysteine 213 are each lipidated (S-geranylgeranyl cysteine).

The protein belongs to the small GTPase superfamily. Rab family. As to quaternary structure, interacts (GTP-bound form) with Vps16A and Vps39; the interaction with Vps39 is probably direct.

The protein localises to the vesicle. Its subcellular location is the cytoplasmic vesicle. It localises to the cell projection. The protein resides in the axon. It is found in the presynapse. The protein localises to the presynaptic active zone. Its subcellular location is the golgi apparatus. It localises to the trans-Golgi network. The protein resides in the perikaryon. It is found in the autophagosome membrane. The protein localises to the autolysosome membrane. It catalyses the reaction GTP + H2O = GDP + phosphate + H(+). May be involved in bidirectional endoplasmic reticulum (ER) to Golgi trafficking. Together with Rab7 involved in promoting fusion of autophagosomes and endosomes with lysosomes, probably through recruitment of the HOPS tethering complex. Involved in biosynthetic transport to lysosomes. In larval motor neurons, mediates the biogenesis of presynaptic cargo vesicles and their long-range axonal trafficking to synaptic termini. Not involved in axonal trafficking of mitochondria. During vesicle biogenesis, active zone proteins (including brp/Bruchpilot) and synaptic vesicle proteins (including VGlut) are sorted from the trans-Golgi in a Rab2-dependent manner via, at least, two independent routes. Acts upstream of Arl8 during presynaptic precursor vesicle biogenesis. Associated with lysosomal marker positive presynaptic cargo vesicles during anterograde and retrograde axonal trafficking, probably while in its GTP-bound active state. Involved in the delivery of presynaptic cargos, but not presynapse assembly or active zone function at synaptic termini. Required for autophagocytosis-dependent remodeling of myofibrils and transverse-tubules (T-tubules) during metamorphosis. This chain is Ras-related protein Rab-2, found in Drosophila melanogaster (Fruit fly).